We begin with the raw amino-acid sequence, 557 residues long: Arginine--tRNA ligase (557 aa).

The 'HIGH' region signature appears at 132–142 (ANPTGDLHLGH).

This sequence belongs to the class-I aminoacyl-tRNA synthetase family. Monomer.

It is found in the cytoplasm. It catalyses the reaction tRNA(Arg) + L-arginine + ATP = L-arginyl-tRNA(Arg) + AMP + diphosphate. The sequence is that of Arginine--tRNA ligase from Geobacillus kaustophilus (strain HTA426).